The following is a 746-amino-acid chain: SNF-related serine/threonine-protein kinase (746 aa).

Residues 16-269 (YDLDKTLGRG…LEEIESHPWL (254 aa)) enclose the Protein kinase domain. ATP-binding positions include 22-30 (LGRGHFAVV) and K45. The active-site Proton acceptor is D139. S162 carries the phosphoserine modification. T173 is modified (phosphothreonine; by LKB1). The UBA domain occupies 291–334 (SEEEHNSIIQRMVLGDIADRDAIVEALETNRYNHITATYFLLAE). 5 positions are modified to phosphoserine: S362, S390, S482, S495, and S518. A disordered region spans residues 383-414 (SHATVPQSPARAGDSVLNGHRSKGLCDPAKKD). Positions 494 to 503 (ESDDEFDMDE) are enriched in acidic residues. Positions 494–638 (ESDDEFDMDE…SSSSSPASAA (145 aa)) are disordered. Basic residues predominate over residues 522 to 532 (VHKRYHRRKSQ). The span at 533 to 542 (GRGSSCSSSE) shows a compositional bias: low complexity. R534 bears the Omega-N-methylarginine mark. The span at 549-558 (ESRRRLDKDS) shows a compositional bias: basic and acidic residues. Gly residues-rich tracts occupy residues 575–592 (GSEGDGGGQSKPSGGGGV) and 600–614 (QGTGGSGQGGSGGTP). The span at 615-638 (SGTAGSSRRCAGPDSSSSSPASAA) shows a compositional bias: low complexity.

It belongs to the protein kinase superfamily. CAMK Ser/Thr protein kinase family. It depends on Mg(2+) as a cofactor. Post-translationally, autophosphorylated. Phosphorylation on Thr-173 by STK11/LKB1 in complex with STE20-related adapter-alpha (STRADA) pseudo kinase and CAB39. In terms of tissue distribution, ubiquitously expressed in all tissues examined with highest levels in the brain and testis. Strongly expressed in the pyramidal and granule neurons of the hippocampus and also in the cerebellum.

Its subcellular location is the nucleus. It carries out the reaction L-seryl-[protein] + ATP = O-phospho-L-seryl-[protein] + ADP + H(+). It catalyses the reaction L-threonyl-[protein] + ATP = O-phospho-L-threonyl-[protein] + ADP + H(+). With respect to regulation, activated by phosphorylation on Thr-173. May play a role in hematopoietic cell proliferation or differentiation. Potential mediator of neuronal apoptosis. The protein is SNF-related serine/threonine-protein kinase of Rattus norvegicus (Rat).